A 319-amino-acid polypeptide reads, in one-letter code: Telomere-binding protein cav (319 aa).

Residues arginine 107–glutamate 312 are required for binding to Su(var)205. Disordered regions lie at residues tryptophan 141–valine 163 and proline 186–tyrosine 248. 2 consecutive short sequence motifs (su(var)205-binding Pro-containing repeat) follow at residues proline 220–methionine 224 and proline 273–glutamate 279. Residues serine 291–serine 311 show a composition bias toward polar residues. The disordered stretch occupies residues serine 291–asparagine 319.

Interacts (via C-terminus) with Su(var)205 dimer (via hinge and chromoshadow domain) and with moi to form the terminin, telomere-capping, complex. Interacts with HP6, which is also part of the terminin complex.

It is found in the nucleus. The protein localises to the chromosome. The protein resides in the telomere. Its function is as follows. Binds to chromosome ends in a sequence-dependent manner and is required for telomere capping. The sequence is that of Telomere-binding protein cav from Drosophila yakuba (Fruit fly).